The sequence spans 135 residues: Small ribosomal subunit protein uS9 (135 aa).

The protein belongs to the universal ribosomal protein uS9 family.

The polypeptide is Small ribosomal subunit protein uS9 (Petrotoga mobilis (strain DSM 10674 / SJ95)).